Here is a 319-residue protein sequence, read N- to C-terminus: Extracellular phospholipase A1 (319 aa).

The first 24 residues, 1-24 (MSMPLSFTSAVSPVAAIPTPRAAA), serve as a signal peptide directing secretion.

The enzyme catalyses a 1,2-diacyl-sn-glycero-3-phosphocholine + H2O = a 2-acyl-sn-glycero-3-phosphocholine + a fatty acid + H(+). The protein is Extracellular phospholipase A1 (phlA) of Serratia liquefaciens.